Here is a 91-residue protein sequence, read N- to C-terminus: Small ribosomal subunit protein bS20 (91 aa).

The segment at 1-28 (MPNIKSAIKRTKTIEKRRAHRASQKSDL) is disordered. Residues 7 to 23 (AIKRTKTIEKRRAHRAS) are compositionally biased toward basic residues.

Belongs to the bacterial ribosomal protein bS20 family.

Its function is as follows. Binds directly to 16S ribosomal RNA. This Brevibacillus brevis (strain 47 / JCM 6285 / NBRC 100599) protein is Small ribosomal subunit protein bS20.